The primary structure comprises 290 residues: Aquaporin PIP2-1 (290 aa).

The segment at 1-20 (MGKDDVIESGAGGGEFAAKD) is disordered. Transmembrane regions (helical) follow at residues 43 to 63 (AVIA…ATVI) and 80 to 100 (CGGV…FVLV). The short motif at 112–114 (NPA) is the NPA 1 element. The next 3 helical transmembrane spans lie at 131-151 (LLYI…VKAF), 173-193 (GTGL…VFSA), and 205-225 (VPVL…LATI). Residues 233–235 (NPA) carry the NPA 2 motif. The helical transmembrane segment at 255–275 (IFWVGPLVGAAIAAFYHQYIL) threads the bilayer.

Belongs to the MIP/aquaporin (TC 1.A.8) family. PIP (TC 1.A.8.11) subfamily. In terms of assembly, homomers. Can interact with PIP1-2 to form heteromers. Expressed in roots.

The protein localises to the cell membrane. Water channel required to facilitate the transport of water across cell membrane. Active as homomers. Increased activity when heteromerization with PIP1-2. This Zea mays (Maize) protein is Aquaporin PIP2-1 (PIP2-1).